The following is a 331-amino-acid chain: Peroxidase 60 (331 aa).

A signal peptide spans 1-26 (MAVKISTIEVLILSLALLSFGHGCYG). 4 disulfides stabilise this stretch: cysteine 37/cysteine 113, cysteine 70/cysteine 75, cysteine 119/cysteine 321, and cysteine 198/cysteine 230. Histidine 68 (proton acceptor) is an active-site residue. Positions 69, 74, 76, and 78 each coordinate Ca(2+). Residue proline 161 coordinates substrate. Histidine 191 is a heme b binding site. Threonine 192 is a Ca(2+) binding site. Asparagine 245 carries an N-linked (GlcNAc...) asparagine glycan. Ca(2+)-binding residues include serine 248 and aspartate 253.

This sequence belongs to the peroxidase family. Classical plant (class III) peroxidase subfamily. It depends on heme b as a cofactor. Ca(2+) serves as cofactor. In terms of tissue distribution, expressed in roots, slightly in leaves.

The protein resides in the secreted. The catalysed reaction is 2 a phenolic donor + H2O2 = 2 a phenolic radical donor + 2 H2O. In terms of biological role, removal of H(2)O(2), oxidation of toxic reductants, biosynthesis and degradation of lignin, suberization, auxin catabolism, response to environmental stresses such as wounding, pathogen attack and oxidative stress. These functions might be dependent on each isozyme/isoform in each plant tissue. The sequence is that of Peroxidase 60 (PER60) from Arabidopsis thaliana (Mouse-ear cress).